The following is a 1303-amino-acid chain: DNA-directed RNA polymerase subunit beta'' (1303 aa).

The Zn(2+) site is built by cysteine 225, cysteine 299, cysteine 306, and cysteine 309.

Belongs to the RNA polymerase beta' chain family. RpoC2 subfamily. In plastids the minimal PEP RNA polymerase catalytic core is composed of four subunits: alpha, beta, beta', and beta''. When a (nuclear-encoded) sigma factor is associated with the core the holoenzyme is formed, which can initiate transcription. The cofactor is Zn(2+).

It localises to the plastid. The protein resides in the chloroplast. The enzyme catalyses RNA(n) + a ribonucleoside 5'-triphosphate = RNA(n+1) + diphosphate. DNA-dependent RNA polymerase catalyzes the transcription of DNA into RNA using the four ribonucleoside triphosphates as substrates. This is DNA-directed RNA polymerase subunit beta'' from Rhodomonas salina (Cryptomonas salina).